A 472-amino-acid chain; its full sequence is 2-methylcitrate synthase, mitochondrial (472 aa).

The N-terminal 29 residues, 1–29 (MALNLTTSRRALGSLKPLTRAAFVGARGY), are a transit peptide targeting the mitochondrion. Positions 75 and 193 each coordinate CoA. Residue His271 participates in oxaloacetate binding. Residue Leu306 coordinates CoA. The active site involves His307. Positions 348, 350, and 351 each coordinate CoA. Oxaloacetate is bound by residues His353 and Arg362. His353 is a catalytic residue. 3 residues coordinate CoA: Thr402, Lys403, and Asn408. Asp410 is a catalytic residue. Residues Arg436 and Arg456 each coordinate oxaloacetate.

It belongs to the citrate synthase family. In terms of assembly, homodimer.

Its subcellular location is the mitochondrion matrix. The catalysed reaction is propanoyl-CoA + oxaloacetate + H2O = (2S,3S)-2-methylcitrate + CoA + H(+). The enzyme catalyses oxaloacetate + acetyl-CoA + H2O = citrate + CoA + H(+). It functions in the pathway organic acid metabolism; propanoate degradation. In terms of biological role, component of the methylcitrate cycle that catalyzes the synthesis of (2S,3S)-2-methylcitrate from propionyl-CoA and oxaloacetate. Plays an important role in detoxification of propionyl-CoA, an inhibitor of both primary and secondary metabolism. Also has citrate synthase activity using as substrates acetyl-CoA and oxaloacetate. This is 2-methylcitrate synthase, mitochondrial from Fusarium solani (Filamentous fungus).